A 177-amino-acid polypeptide reads, in one-letter code: Pyruvate synthase subunit PorC (177 aa).

As to quaternary structure, heterotetramer of one alpha, one beta, one delta and one gamma chain.

It carries out the reaction 2 oxidized [2Fe-2S]-[ferredoxin] + pyruvate + CoA = 2 reduced [2Fe-2S]-[ferredoxin] + acetyl-CoA + CO2 + H(+). This Methanothermobacter marburgensis (strain ATCC BAA-927 / DSM 2133 / JCM 14651 / NBRC 100331 / OCM 82 / Marburg) (Methanobacterium thermoautotrophicum) protein is Pyruvate synthase subunit PorC (porC).